The following is a 557-amino-acid chain: Urocanate hydratase (557 aa).

Residues 48-49 (GG), glutamine 126, 178-180 (GMG), aspartate 198, arginine 203, 244-245 (NA), 265-269 (QTSAH), 274-275 (YL), and tyrosine 323 contribute to the NAD(+) site. The active site involves cysteine 411. Residue glycine 493 participates in NAD(+) binding.

The protein belongs to the urocanase family. Requires NAD(+) as cofactor.

It is found in the cytoplasm. The enzyme catalyses 4-imidazolone-5-propanoate = trans-urocanate + H2O. The protein operates within amino-acid degradation; L-histidine degradation into L-glutamate; N-formimidoyl-L-glutamate from L-histidine: step 2/3. Functionally, catalyzes the conversion of urocanate to 4-imidazolone-5-propionate. The chain is Urocanate hydratase from Beutenbergia cavernae (strain ATCC BAA-8 / DSM 12333 / CCUG 43141 / JCM 11478 / NBRC 16432 / NCIMB 13614 / HKI 0122).